The sequence spans 160 residues: Prostaglandin E synthase 3 (160 aa).

The CS domain occupies 1–90; it reads MQPASAKWYD…ESGQSWPRLT (90 aa). K33 bears the N6-acetyllysine mark. A Glycyl lysine isopeptide (Lys-Gly) (interchain with G-Cter in SUMO2) cross-link involves residue K35. Position 44 is a phosphoserine (S44). K65 participates in a covalent cross-link: Glycyl lysine isopeptide (Lys-Gly) (interchain with G-Cter in SUMO2). A phosphoserine mark is found at S85, S100, S113, S118, S148, and S151. Positions 124 to 160 are disordered; that stretch reads SEMMNNMGGDEDVDLPEVDGADDDSQDSDDEKMPDLE. Positions 132–153 are enriched in acidic residues; the sequence is GDEDVDLPEVDGADDDSQDSDD. The PXLE motif signature appears at 157–160; it reads PDLE.

Belongs to the p23/wos2 family. As to quaternary structure, probably forms a complex composed of chaperones HSP90 and HSP70, co-chaperones STIP1/HOP, CDC37, PPP5C, PTGES3/p23, TSC1 and client protein TSC2. Binds to the progesterone receptor. Interacts with TERT; the interaction, together with HSP90AA1, is required for correct assembly and stabilization of the telomerase holoenzyme complex. Interacts (via PXLE motif) with EGLN1/PHD2, recruiting EGLN1/PHD2 to the HSP90 pathway to facilitate HIF alpha proteins hydroxylation. Interacts with HSP90AA1, FLCN, FNIP1 and FNIP2. Post-translationally, proteolytically cleaved by caspase-7 (CASP7) in response to apoptosis, leading to its inactivation. In terms of tissue distribution, detected in testis and ovary, at lower levels in endometrium, myometrium, kidney and lung, and only faintly in spleen, heart and muscle (at protein level). Expressed at high levels in glandular and luminal epithelial cells of the endometrium, but also detected in stromal cells (at protein level).

The protein localises to the cytoplasm. It carries out the reaction prostaglandin H2 = prostaglandin E2. It participates in lipid metabolism; prostaglandin biosynthesis. In terms of biological role, cytosolic prostaglandin synthase that catalyzes the oxidoreduction of prostaglandin endoperoxide H2 (PGH2) to prostaglandin E2 (PGE2). Molecular chaperone that localizes to genomic response elements in a hormone-dependent manner and disrupts receptor-mediated transcriptional activation, by promoting disassembly of transcriptional regulatory complexes. Facilitates HIF alpha proteins hydroxylation via interaction with EGLN1/PHD2, leading to recruit EGLN1/PHD2 to the HSP90 pathway. The sequence is that of Prostaglandin E synthase 3 (PTGES3) from Bos taurus (Bovine).